Consider the following 247-residue polypeptide: 1-(5-phosphoribosyl)-5-[(5-phosphoribosylamino)methylideneamino] imidazole-4-carboxamide isomerase (247 aa).

Aspartate 8 functions as the Proton acceptor in the catalytic mechanism. The active-site Proton donor is the aspartate 130.

Belongs to the HisA/HisF family.

Its subcellular location is the cytoplasm. The enzyme catalyses 1-(5-phospho-beta-D-ribosyl)-5-[(5-phospho-beta-D-ribosylamino)methylideneamino]imidazole-4-carboxamide = 5-[(5-phospho-1-deoxy-D-ribulos-1-ylimino)methylamino]-1-(5-phospho-beta-D-ribosyl)imidazole-4-carboxamide. It functions in the pathway amino-acid biosynthesis; L-histidine biosynthesis; L-histidine from 5-phospho-alpha-D-ribose 1-diphosphate: step 4/9. The polypeptide is 1-(5-phosphoribosyl)-5-[(5-phosphoribosylamino)methylideneamino] imidazole-4-carboxamide isomerase (Stutzerimonas stutzeri (strain A1501) (Pseudomonas stutzeri)).